The following is a 65-amino-acid chain: Toxin Cbi1 (65 aa).

Residues 1 to 64 (KDGYPMDNKG…VWDRATNKCR (64 aa)) form the LCN-type CS-alpha/beta domain. 4 cysteine pairs are disulfide-bonded: cysteine 11-cysteine 63, cysteine 15-cysteine 37, cysteine 22-cysteine 44, and cysteine 26-cysteine 46.

Belongs to the long (4 C-C) scorpion toxin superfamily. Sodium channel inhibitor family. Beta subfamily. Expressed by the venom gland.

The protein resides in the secreted. Functionally, beta toxins bind voltage-independently at site-4 of sodium channels (Nav) and shift the voltage of activation toward more negative potentials thereby affecting sodium channel activation and promoting spontaneous and repetitive firing. This is Toxin Cbi1 from Centruroides bicolor (Scorpion).